The primary structure comprises 316 residues: Putative HTH-type transcriptional regulatory protein PYRAB03670 (316 aa).

Positions 131 to 189 (LKDLREKHGYSLSELANILGVSRKSLQRYEKGDSMVTLEVALRLEEVFDEALVKPINVL) constitute an HTH cro/C1-type domain. A DNA-binding region (H-T-H motif) is located at residues 142 to 161 (LSELANILGVSRKSLQRYEK).

This is Putative HTH-type transcriptional regulatory protein PYRAB03670 from Pyrococcus abyssi (strain GE5 / Orsay).